The chain runs to 293 residues: MTRDPIATARTLSEALPYLQRYAGAVVVVKFGGNAMGDEAAMAEFARDIVLMRQVGVNPVVVHGGGPMINELLGKLGIKSEFVRGKRVTDKATVEVVEMVLSGLVNKRIVQAINDQGGRAVGISGKDDDLMVCVADDPDLGFVGKPVEMNVQVLRDLYNAGIIPVVAPVATGMADNETFNVNGDTAAGAIAGALQADRLLLLTDVAGVKDASGEVLSQLTPSQVREMVASGTISGGMIPKTETALAALDEGVRAVVILDGRTPNACLIEIFTDEGAGTIIRSTEPRVKPRVRR.

Substrate-binding positions include 65–66, R87, and N180; that span reads GG.

The protein belongs to the acetylglutamate kinase family. ArgB subfamily.

It localises to the cytoplasm. It catalyses the reaction N-acetyl-L-glutamate + ATP = N-acetyl-L-glutamyl 5-phosphate + ADP. The protein operates within amino-acid biosynthesis; L-arginine biosynthesis; N(2)-acetyl-L-ornithine from L-glutamate: step 2/4. Its function is as follows. Catalyzes the ATP-dependent phosphorylation of N-acetyl-L-glutamate. The polypeptide is Acetylglutamate kinase (Cereibacter sphaeroides (strain ATCC 17029 / ATH 2.4.9) (Rhodobacter sphaeroides)).